A 642-amino-acid chain; its full sequence is Bifunctional protein glk (642 aa).

Residues 1 to 340 (MSTGAQSKAA…QLSNRSGGAS (340 aa)) are glucokinase. 23-28 (ADVGGT) provides a ligand contact to ATP. In terms of domain architecture, HTH rpiR-type spans 341–417 (SAVFERIRQM…LKLATGLTGT (77 aa)). The tract at residues 341-642 (SAVFERIRQM…SPAAKDVARD (302 aa)) is putative HTH-type transcriptional regulator. A DNA-binding region (H-T-H motif) is located at residues 377-396 (IVDIARKADVSQPTVIRFCR). The SIS domain occupies 461–600 (AIEILNGARR…AVGVAIRRAS (140 aa)). Residues 576-596 (SMISRILHLLMIDILAVGVAI) form a helical membrane-spanning segment.

The protein in the N-terminal section; belongs to the bacterial glucokinase family.

It is found in the membrane. The catalysed reaction is D-glucose + ATP = D-glucose 6-phosphate + ADP + H(+). The protein is Bifunctional protein glk (glk) of Burkholderia lata (strain ATCC 17760 / DSM 23089 / LMG 22485 / NCIMB 9086 / R18194 / 383).